Here is a 352-residue protein sequence, read N- to C-terminus: Quinolinate synthase (352 aa).

2 residues coordinate iminosuccinate: His48 and Ser69. Cys114 lines the [4Fe-4S] cluster pocket. Iminosuccinate is bound by residues 140 to 142 (YAN) and Ser157. Residue Cys201 coordinates [4Fe-4S] cluster. Iminosuccinate contacts are provided by residues 227–229 (HPE) and Thr244. Residue Cys298 participates in [4Fe-4S] cluster binding.

This sequence belongs to the quinolinate synthase family. Type 1 subfamily. [4Fe-4S] cluster is required as a cofactor.

The protein localises to the cytoplasm. The enzyme catalyses iminosuccinate + dihydroxyacetone phosphate = quinolinate + phosphate + 2 H2O + H(+). It participates in cofactor biosynthesis; NAD(+) biosynthesis; quinolinate from iminoaspartate: step 1/1. In terms of biological role, catalyzes the condensation of iminoaspartate with dihydroxyacetone phosphate to form quinolinate. This is Quinolinate synthase from Pseudomonas entomophila (strain L48).